Here is a 417-residue protein sequence, read N- to C-terminus: NADH-quinone oxidoreductase subunit D (417 aa).

Belongs to the complex I 49 kDa subunit family. In terms of assembly, NDH-1 is composed of 14 different subunits. Subunits NuoB, C, D, E, F, and G constitute the peripheral sector of the complex.

It is found in the cell inner membrane. The catalysed reaction is a quinone + NADH + 5 H(+)(in) = a quinol + NAD(+) + 4 H(+)(out). NDH-1 shuttles electrons from NADH, via FMN and iron-sulfur (Fe-S) centers, to quinones in the respiratory chain. The immediate electron acceptor for the enzyme in this species is believed to be ubiquinone. Couples the redox reaction to proton translocation (for every two electrons transferred, four hydrogen ions are translocated across the cytoplasmic membrane), and thus conserves the redox energy in a proton gradient. The polypeptide is NADH-quinone oxidoreductase subunit D (Halorhodospira halophila (strain DSM 244 / SL1) (Ectothiorhodospira halophila (strain DSM 244 / SL1))).